We begin with the raw amino-acid sequence, 117 residues long: Ig heavy chain V region G4 (117 aa).

Residues 1-19 (MTHWLCFTLALVAVRGVLS) form the signal peptide. The segment at 20–49 (EIQLVESGGAIRKPGDSLRLSCKASGFTFS) is framework-1. A disulfide bond links Cys41 and Cys115. The interval 50 to 54 (DTWMA) is complementarity-determining-1. The framework-2 stretch occupies residues 55-68 (WARQPPGKGLQWVG). Positions 69–85 (EINGNSETIRYAPEVKG) are complementarity-determining-2. Residues 86–117 (RLTISRDNTQNLLFLQISSLKPEDTATYYCAR) are framework-3.

The protein is Ig heavy chain V region G4 (G4) of Caiman crocodilus (Spectacled caiman).